The following is a 476-amino-acid chain: FAD-dependent monooxygenase prhF (476 aa).

Residues Glu-41, Gly-55, and Arg-114 each coordinate FAD. The active site involves Tyr-222. FAD is bound by residues Asp-314 and Ala-327. Residue Asn-343 is glycosylated (N-linked (GlcNAc...) asparagine). Residues 447–467 form a helical membrane-spanning segment; sequence LGSTPIQMLTLLLPCLFYFMY. The N-linked (GlcNAc...) asparagine glycan is linked to Asn-471.

Belongs to the paxM FAD-dependent monooxygenase family. FAD is required as a cofactor.

It is found in the membrane. Its pathway is secondary metabolite biosynthesis; terpenoid biosynthesis. FAD-dependent monooxygenase; part of the gene cluster that mediates the biosynthesis of paraherquonin, a meroterpenoid with a unique, highly congested hexacyclic molecular architecture. The first step of the pathway is the synthesis of 3,5-dimethylorsellinic acid (DMOA) by the polyketide synthase prhL. Synthesis of DMOA is followed by farnesylation by the prenyltransferase prhE, methylesterification by the methyl-transferase prhM, epoxidation of the prenyl chain by the flavin-dependent monooxygenase prhF, and cyclization of the farnesyl moiety by the terpene cyclase prhH, to yield the tetracyclic intermediate, protoaustinoid A. The short chain dehydrogenase prhI then oxidizes the C-3 alcohol group of the terpene cyclase product to transform protoaustinoid A into protoaustinoid B. The FAD-binding monooxygenase prhJ catalyzes the oxidation of protoaustinoid B into preaustinoid A which is further oxidized into preaustinoid A1 by FAD-binding monooxygenase phrK. Finally, prhA leads to berkeleydione via the berkeleyone B intermediate. PrhA is a multifunctional dioxygenase that first desaturates at C5-C6 to form berkeleyone B, followed by rearrangement of the A/B-ring to form the cycloheptadiene moiety in berkeleydione. Berkeleydione serves as the key intermediate for the biosynthesis of paraherquonin as well as many other meroterpenoids. The cytochrome P450 monooxygenases prhB, prhD, and prhN, as well as the isomerase prhC, are probably involved in the late stage of paraherquonin biosynthesis, after the production of berkeleydione. Especially prhC might be a multifunctional enzyme that catalyzes the D-ring expansion via intramolecular methoxy rearrangement, as well as the hydrolysis of the expanded D-ring. In Penicillium brasilianum, this protein is FAD-dependent monooxygenase prhF.